A 332-amino-acid polypeptide reads, in one-letter code: Mitoferrin-1 (332 aa).

Solcar repeat units lie at residues 31-119 (ASLG…IKRS), 129-213 (NSHI…MQEH), and 220-314 (YRPE…FKYF). 6 consecutive transmembrane segments (helical) span residues 33–52 (LGTH…TVMY), 94–113 (GLNI…FACY), 131–150 (HIAN…AVMN), 188–207 (SYST…FITY), 222–241 (PETH…AVTT), and 289–308 (GIQA…WSVY).

It belongs to the mitochondrial carrier (TC 2.A.29) family. Highly expressed in hematopoietic organs, Expressed in the intermediate cell mass (ICM), a tissue equivalent to the mammalian extraembryonic yolk-sac blood islands. Colocalizes with gata1.

The protein localises to the mitochondrion inner membrane. It catalyses the reaction Fe(2+)(in) = Fe(2+)(out). Mitochondrial iron transporter that specifically mediates iron uptake in developing erythroid cells, thereby playing an essential role in heme biosynthesis. This chain is Mitoferrin-1 (slc25a37), found in Danio rerio (Zebrafish).